Here is a 493-residue protein sequence, read N- to C-terminus: 3-octaprenyl-4-hydroxybenzoate carboxy-lyase (493 aa).

Residue asparagine 172 participates in Mn(2+) binding. Prenylated FMN-binding positions include isoleucine 175 to arginine 177, arginine 189 to leucine 191, and arginine 194 to glycine 195. Glutamate 238 serves as a coordination point for Mn(2+). The active-site Proton donor is the aspartate 287.

The protein belongs to the UbiD family. Homohexamer. Requires prenylated FMN as cofactor. Mn(2+) is required as a cofactor.

The protein localises to the cell membrane. The enzyme catalyses a 4-hydroxy-3-(all-trans-polyprenyl)benzoate + H(+) = a 2-(all-trans-polyprenyl)phenol + CO2. Its pathway is cofactor biosynthesis; ubiquinone biosynthesis. Functionally, catalyzes the decarboxylation of 3-octaprenyl-4-hydroxy benzoate to 2-octaprenylphenol, an intermediate step in ubiquinone biosynthesis. The polypeptide is 3-octaprenyl-4-hydroxybenzoate carboxy-lyase (Shewanella pealeana (strain ATCC 700345 / ANG-SQ1)).